The following is a 247-amino-acid chain: Anamorsin homolog (247 aa).

An N-terminal SAM-like domain region spans residues F4–F128. The interval A129–K160 is linker. [2Fe-2S] cluster contacts are provided by C171, C180, C183, and C185. The tract at residues C171–C185 is fe-S binding site A. [4Fe-4S] cluster contacts are provided by C208, C211, C219, and C222. 2 short sequence motifs (cx2C motif) span residues C208 to C211 and C219 to C222. Residues C208 to C222 form a fe-S binding site B region.

This sequence belongs to the anamorsin family. Monomer. [2Fe-2S] cluster serves as cofactor. The cofactor is [4Fe-4S] cluster.

It localises to the cytoplasm. Its subcellular location is the mitochondrion intermembrane space. Functionally, component of the cytosolic iron-sulfur (Fe-S) protein assembly (CIA) machinery. Required for the maturation of extramitochondrial Fe-S proteins. Part of an electron transfer chain functioning in an early step of cytosolic Fe-S biogenesis, facilitating the de novo assembly of a [4Fe-4S] cluster on the cytosolic Fe-S scaffold complex. Electrons are transferred from NADPH via a FAD- and FMN-containing diflavin oxidoreductase. Together with the diflavin oxidoreductase, also required for the assembly of the diferric tyrosyl radical cofactor of ribonucleotide reductase (RNR), probably by providing electrons for reduction during radical cofactor maturation in the catalytic small subunit. This Drosophila persimilis (Fruit fly) protein is Anamorsin homolog.